Here is a 500-residue protein sequence, read N- to C-terminus: Beta-glucosidase 30 (500 aa).

The N-terminal stretch at 1-25 (MGIRMGRRLLFTLFLGALFCNGVYA) is a signal peptide. Gln-46 contributes to the a beta-D-glucoside binding site. N-linked (GlcNAc...) asparagine glycans are attached at residues Asn-63 and Asn-114. Residues His-149 and 194–195 (NE) each bind a beta-D-glucoside. Catalysis depends on Glu-195, which acts as the Proton donor. The cysteines at positions 214 and 222 are disulfide-linked. An a beta-D-glucoside-binding site is contributed by Tyr-338. N-linked (GlcNAc...) asparagine glycosylation occurs at Asn-363. Glu-409 provides a ligand contact to a beta-D-glucoside. Glu-409 (nucleophile) is an active-site residue. N-linked (GlcNAc...) asparagine glycans are attached at residues Asn-416 and Asn-417. Residues Trp-456, 463-464 (EW), and Phe-472 contribute to the a beta-D-glucoside site.

This sequence belongs to the glycosyl hydrolase 1 family.

The catalysed reaction is Hydrolysis of terminal, non-reducing beta-D-glucosyl residues with release of beta-D-glucose.. The protein is Beta-glucosidase 30 (BGLU30) of Oryza sativa subsp. japonica (Rice).